We begin with the raw amino-acid sequence, 854 residues long: V-type proton ATPase 116 kDa subunit a 2 (854 aa).

At 1-393 (MGSLFRSETM…DAYGVGSYQE (393 aa)) the chain is on the cytoplasmic side. The chain crosses the membrane as a helical span at residues 394 to 412 (VNPALFTIITFPFLFAVMF). Residues 413 to 414 (GD) are Vacuolar-facing. Residues 415-431 (FGHGFVMFLFALLLVLN) form a helical membrane-spanning segment. At 432–445 (ENHPRLNQSQEIMR) the chain is on the cytoplasmic side. Residues 446–475 (MFFNGRYILLLMGLFSVYTGLIYNDCFSKS) traverse the membrane as a helical segment. Residues 476–549 (VNLFGSRWNV…ATNRLTFLNS (74 aa)) lie on the Vacuolar side of the membrane. A helical transmembrane segment spans residues 550 to 569 (FKMKMSVILGITHMTFGVIL). Residues 570–587 (GIFNHLHFRKKFNICLVS) lie on the Cytoplasmic side of the membrane. Residues 588–608 (IPELLFMLCIFGYLIFMIIYK) traverse the membrane as a helical segment. Over 609–651 (WLVYSAETSRTAPSILIEFISMFLFLASDTGGLYPGQEHVQRL) the chain is Vacuolar. A helical transmembrane segment spans residues 652-671 (LLLITVLSVPVLFLGKPLFL). Over 672–739 (LWLHRGRSCF…EILMTQIIHS (68 aa)) the chain is Cytoplasmic. Phosphoserine occurs at positions 695 and 700. A helical membrane pass occupies residues 740–764 (IEYCLGCISNTASYLRLWALSLAHA). Over 765–785 (QLSEVLWAMLMHVGLRVDTAY) the chain is Vacuolar. A helical transmembrane segment spans residues 786-824 (GVLVLLPVIAFFAVLTIFILLIMEGLSAFLHAIRLHWVE). Residues 825–854 (FQNKFYVGAGTKFVPFSFRLLSSKFSDDLA) lie on the Cytoplasmic side of the membrane.

It belongs to the V-ATPase 116 kDa subunit family. As to quaternary structure, V-ATPase is a heteromultimeric enzyme made up of two complexes: the ATP-hydrolytic V1 complex and the proton translocation V0 complex. The V1 complex consists of three catalytic AB heterodimers that form a heterohexamer, three peripheral stalks each consisting of EG heterodimers, one central rotor including subunits D and F, and the regulatory subunits C and H. The proton translocation complex V0 consists of the proton transport subunit a, a ring of proteolipid subunits c9c'', rotary subunit d, subunits e and f, and the accessory subunits ATP6AP1/Ac45 and ATP6AP2/PRR. Directly interacts with PSCD2 through its N-terminal cytosolic tail in an intra-endosomal acidification-dependent manner. Disruption of this interaction results in the inhibition of endocytosis. Interacts with SPAAR. Highly expressed in lung, kidney and spleen.

Its subcellular location is the cell membrane. It is found in the endosome membrane. Functionally, subunit of the V0 complex of vacuolar(H+)-ATPase (V-ATPase), a multisubunit enzyme composed of a peripheral complex (V1) that hydrolyzes ATP and a membrane integral complex (V0) that translocates protons. V-ATPase is responsible for acidifying and maintaining the pH of intracellular compartments and in some cell types, is targeted to the plasma membrane, where it is responsible for acidifying the extracellular environment. Essential component of the endosomal pH-sensing machinery. May play a role in maintaining the Golgi functions, such as glycosylation maturation, by controlling the Golgi pH. In aerobic conditions, involved in intracellular iron homeostasis, thus triggering the activity of Fe(2+) prolyl hydroxylase (PHD) enzymes, and leading to HIF1A hydroxylation and subsequent proteasomal degradation. The sequence is that of V-type proton ATPase 116 kDa subunit a 2 (ATP6V0A2) from Bos taurus (Bovine).